A 303-amino-acid polypeptide reads, in one-letter code: Probable cell division protein WhiA (303 aa).

Positions Ser272–Leu303 form a DNA-binding region, H-T-H motif.

This sequence belongs to the WhiA family.

Functionally, involved in cell division and chromosome segregation. The sequence is that of Probable cell division protein WhiA from Streptococcus thermophilus (strain ATCC BAA-250 / LMG 18311).